Reading from the N-terminus, the 94-residue chain is Co-chaperonin GroES (94 aa).

The interval 17–53 (DSNPNSPIQLPDSAKKKPTKGKVVSVGPGASNSDGKV) is disordered.

The protein belongs to the GroES chaperonin family. In terms of assembly, heptamer of 7 subunits arranged in a ring. Interacts with the chaperonin GroEL.

The protein localises to the cytoplasm. Its function is as follows. Together with the chaperonin GroEL, plays an essential role in assisting protein folding. The GroEL-GroES system forms a nano-cage that allows encapsulation of the non-native substrate proteins and provides a physical environment optimized to promote and accelerate protein folding. GroES binds to the apical surface of the GroEL ring, thereby capping the opening of the GroEL channel. The protein is Co-chaperonin GroES of Anaplasma phagocytophilum (strain HZ).